Reading from the N-terminus, the 409-residue chain is Tyrosine--tRNA ligase (409 aa).

An L-tyrosine-binding site is contributed by Y35. Residues 40 to 49 (PTGSSLHVGH) carry the 'HIGH' region motif. Y168 and Q172 together coordinate L-tyrosine. A 'KMSKS' region motif is present at residues 228-232 (KMGKT). An ATP-binding site is contributed by K231. The region spanning 339 to 404 (IKVTDLFVQV…AGKKRVVRIV (66 aa)) is the S4 RNA-binding domain.

Belongs to the class-I aminoacyl-tRNA synthetase family. TyrS type 1 subfamily. As to quaternary structure, homodimer.

It is found in the cytoplasm. It carries out the reaction tRNA(Tyr) + L-tyrosine + ATP = L-tyrosyl-tRNA(Tyr) + AMP + diphosphate + H(+). Its function is as follows. Catalyzes the attachment of tyrosine to tRNA(Tyr) in a two-step reaction: tyrosine is first activated by ATP to form Tyr-AMP and then transferred to the acceptor end of tRNA(Tyr). The polypeptide is Tyrosine--tRNA ligase (Treponema pallidum (strain Nichols)).